The chain runs to 281 residues: UPF0750 membrane protein YvjA (281 aa).

A run of 5 helical transmembrane segments spans residues 14–34 (YVYILIGAAITAVSFNVFLLP), 56–76 (AAYVQWIINIPLFIAGVILLG), 77–97 (GKFGLKTLAGSVFLPLVVFLT), 108–128 (LLAAIFGGVGIGIGIGIVYLG), and 149–169 (SLGKCLAIIDGMIVVTAMIVF).

This sequence belongs to the UPF0750 family.

It localises to the cell membrane. The chain is UPF0750 membrane protein YvjA (yvjA) from Bacillus subtilis (strain 168).